A 264-amino-acid chain; its full sequence is Thymidylate synthase (264 aa).

Residue R21 participates in dUMP binding. Position 51 (H51) interacts with (6R)-5,10-methylene-5,6,7,8-tetrahydrofolate. The active-site Nucleophile is C146. Residues 166–169 (RSAD), N177, and 207–209 (HIY) each bind dUMP. D169 contributes to the (6R)-5,10-methylene-5,6,7,8-tetrahydrofolate binding site. Position 263 (A263) interacts with (6R)-5,10-methylene-5,6,7,8-tetrahydrofolate.

This sequence belongs to the thymidylate synthase family. Bacterial-type ThyA subfamily. Homodimer.

The protein resides in the cytoplasm. It carries out the reaction dUMP + (6R)-5,10-methylene-5,6,7,8-tetrahydrofolate = 7,8-dihydrofolate + dTMP. Its pathway is pyrimidine metabolism; dTTP biosynthesis. In terms of biological role, catalyzes the reductive methylation of 2'-deoxyuridine-5'-monophosphate (dUMP) to 2'-deoxythymidine-5'-monophosphate (dTMP) while utilizing 5,10-methylenetetrahydrofolate (mTHF) as the methyl donor and reductant in the reaction, yielding dihydrofolate (DHF) as a by-product. This enzymatic reaction provides an intracellular de novo source of dTMP, an essential precursor for DNA biosynthesis. In Brucella canis (strain ATCC 23365 / NCTC 10854 / RM-666), this protein is Thymidylate synthase.